The following is a 317-amino-acid chain: Melanocyte-stimulating hormone receptor (317 aa).

Topologically, residues 1–37 (MPVQGSQRRLLGSLNSTPTATPHLGLAANQTGARCRE) are extracellular. Residue Asn29 is glycosylated (N-linked (GlcNAc...) asparagine). Residues 38–63 (VSIPDGLFLSLGLVSLVENVLVVTAI) form a helical membrane-spanning segment. The Cytoplasmic segment spans residues 64–72 (AKNRNLHSP). A helical membrane pass occupies residues 73–93 (MYCFICCLALSDLLVSGSNML). Residues 94-118 (ETAVTLLLEAGALVARAAVVQQLDN) are Extracellular-facing. A helical transmembrane segment spans residues 119–140 (VIDVITCSSMLSSLCFLGAIAV). Residues 141-163 (DRYISIFYALRYHSIVTLPRAQR) lie on the Cytoplasmic side of the membrane. A helical transmembrane segment spans residues 164–183 (AIAAIWVASVLCSTLFIAYY). The Extracellular segment spans residues 184 to 191 (DHAAVLLC). The chain crosses the membrane as a helical span at residues 192-211 (LVVFFLAMLVLMAVLYVHML). The Cytoplasmic segment spans residues 212 to 240 (ARACQHAQGIARLHKRQRLAHQGFGLKGA). Residues 241–266 (ATLTILLGIFFLCWGPFFLHLTLIVL) form a helical membrane-spanning segment. Topologically, residues 267–279 (CPQHPTCSCIFKN) are extracellular. The helical transmembrane segment at 280–300 (FNLFLALIICNAIIDPLIYAF) threads the bilayer. The Cytoplasmic portion of the chain corresponds to 301–317 (RSQELRRTLKEVLLCSW). A lipid anchor (S-palmitoyl cysteine) is attached at Cys315.

It belongs to the G-protein coupled receptor 1 family. Interacts with MGRN1, but does not undergo MGRN1-mediated ubiquitination; this interaction competes with GNAS-binding and thus inhibits agonist-induced cAMP production. Interacts with OPN3; the interaction results in a decrease in MC1R-mediated cAMP signaling and ultimately a decrease in melanin production in melanocytes. In terms of tissue distribution, expressed in the adrenal gland.

Its subcellular location is the cell membrane. Its function is as follows. Receptor for MSH (alpha, beta and gamma) and ACTH. The activity of this receptor is mediated by G proteins which activate adenylate cyclase. Mediates melanogenesis, the production of eumelanin (black/brown) and phaeomelanin (red/yellow), via regulation of cAMP signaling in melanocytes. This Macaca mulatta (Rhesus macaque) protein is Melanocyte-stimulating hormone receptor (MC1R).